Here is a 328-residue protein sequence, read N- to C-terminus: Ribosomal RNA small subunit methyltransferase H (328 aa).

S-adenosyl-L-methionine is bound by residues 37-39 (GGH), Asp-57, Phe-83, Asp-104, and Gln-111.

This sequence belongs to the methyltransferase superfamily. RsmH family.

It localises to the cytoplasm. The catalysed reaction is cytidine(1402) in 16S rRNA + S-adenosyl-L-methionine = N(4)-methylcytidine(1402) in 16S rRNA + S-adenosyl-L-homocysteine + H(+). Its function is as follows. Specifically methylates the N4 position of cytidine in position 1402 (C1402) of 16S rRNA. The sequence is that of Ribosomal RNA small subunit methyltransferase H from Neisseria meningitidis serogroup A / serotype 4A (strain DSM 15465 / Z2491).